Reading from the N-terminus, the 179-residue chain is Methylated-DNA--protein-cysteine methyltransferase (179 aa).

Cys130 functions as the Nucleophile; methyl group acceptor in the catalytic mechanism.

It belongs to the MGMT family.

It is found in the cytoplasm. The enzyme catalyses a 6-O-methyl-2'-deoxyguanosine in DNA + L-cysteinyl-[protein] = S-methyl-L-cysteinyl-[protein] + a 2'-deoxyguanosine in DNA. The catalysed reaction is a 4-O-methyl-thymidine in DNA + L-cysteinyl-[protein] = a thymidine in DNA + S-methyl-L-cysteinyl-[protein]. Its function is as follows. Involved in the cellular defense against the biological effects of O6-methylguanine (O6-MeG) and O4-methylthymine (O4-MeT) in DNA. Repairs the methylated nucleobase in DNA by stoichiometrically transferring the methyl group to a cysteine residue in the enzyme. This is a suicide reaction: the enzyme is irreversibly inactivated. In Haemophilus influenzae (strain ATCC 51907 / DSM 11121 / KW20 / Rd), this protein is Methylated-DNA--protein-cysteine methyltransferase.